The chain runs to 461 residues: Cyclin-A2-4 (461 aa).

It belongs to the cyclin family. Cyclin AB subfamily.

The sequence is that of Cyclin-A2-4 (CYCA2-4) from Arabidopsis thaliana (Mouse-ear cress).